The chain runs to 152 residues: SsrA-binding protein (152 aa).

Belongs to the SmpB family.

It is found in the cytoplasm. Required for rescue of stalled ribosomes mediated by trans-translation. Binds to transfer-messenger RNA (tmRNA), required for stable association of tmRNA with ribosomes. tmRNA and SmpB together mimic tRNA shape, replacing the anticodon stem-loop with SmpB. tmRNA is encoded by the ssrA gene; the 2 termini fold to resemble tRNA(Ala) and it encodes a 'tag peptide', a short internal open reading frame. During trans-translation Ala-aminoacylated tmRNA acts like a tRNA, entering the A-site of stalled ribosomes, displacing the stalled mRNA. The ribosome then switches to translate the ORF on the tmRNA; the nascent peptide is terminated with the 'tag peptide' encoded by the tmRNA and targeted for degradation. The ribosome is freed to recommence translation, which seems to be the essential function of trans-translation. The protein is SsrA-binding protein of Rickettsia massiliae (strain Mtu5).